The sequence spans 253 residues: 3-deoxy-manno-octulosonate cytidylyltransferase (253 aa).

The protein belongs to the KdsB family.

The protein localises to the cytoplasm. The enzyme catalyses 3-deoxy-alpha-D-manno-oct-2-ulosonate + CTP = CMP-3-deoxy-beta-D-manno-octulosonate + diphosphate. Its pathway is nucleotide-sugar biosynthesis; CMP-3-deoxy-D-manno-octulosonate biosynthesis; CMP-3-deoxy-D-manno-octulosonate from 3-deoxy-D-manno-octulosonate and CTP: step 1/1. It participates in bacterial outer membrane biogenesis; lipopolysaccharide biosynthesis. In terms of biological role, activates KDO (a required 8-carbon sugar) for incorporation into bacterial lipopolysaccharide in Gram-negative bacteria. The chain is 3-deoxy-manno-octulosonate cytidylyltransferase from Neisseria meningitidis serogroup C / serotype 2a (strain ATCC 700532 / DSM 15464 / FAM18).